Consider the following 192-residue polypeptide: Adenylate kinase (192 aa).

10–18 contacts ATP; it reads GVPGVGGTT.

This sequence belongs to the archaeal adenylate kinase family. As to quaternary structure, monomer.

Its subcellular location is the cytoplasm. The catalysed reaction is AMP + ATP = 2 ADP. The protein is Adenylate kinase of Methanococcus maripaludis (strain C7 / ATCC BAA-1331).